We begin with the raw amino-acid sequence, 260 residues long: Hydroxyethylthiazole kinase (260 aa).

Position 38 (M38) interacts with substrate. Residues K114 and S161 each contribute to the ATP site. G188 is a binding site for substrate.

Belongs to the Thz kinase family. The cofactor is Mg(2+).

The catalysed reaction is 5-(2-hydroxyethyl)-4-methylthiazole + ATP = 4-methyl-5-(2-phosphooxyethyl)-thiazole + ADP + H(+). It functions in the pathway cofactor biosynthesis; thiamine diphosphate biosynthesis; 4-methyl-5-(2-phosphoethyl)-thiazole from 5-(2-hydroxyethyl)-4-methylthiazole: step 1/1. Catalyzes the phosphorylation of the hydroxyl group of 4-methyl-5-beta-hydroxyethylthiazole (THZ). This is Hydroxyethylthiazole kinase from Campylobacter lari (strain RM2100 / D67 / ATCC BAA-1060).